The sequence spans 356 residues: sn-glycerol-3-phosphate import ATP-binding protein UgpC (356 aa).

Residues 4-235 (LKLQAVTKSW…PASLFVASFI (232 aa)) enclose the ABC transporter domain. Residue 37–44 (GPSGCGKS) participates in ATP binding.

The protein belongs to the ABC transporter superfamily. sn-glycerol-3-phosphate importer (TC 3.A.1.1.3) family. The complex is composed of two ATP-binding proteins (UgpC), two transmembrane proteins (UgpA and UgpE) and a solute-binding protein (UgpB).

It is found in the cell inner membrane. It carries out the reaction sn-glycerol 3-phosphate(out) + ATP + H2O = sn-glycerol 3-phosphate(in) + ADP + phosphate + H(+). Its function is as follows. Part of the ABC transporter complex UgpBAEC involved in sn-glycerol-3-phosphate (G3P) import. Responsible for energy coupling to the transport system. This chain is sn-glycerol-3-phosphate import ATP-binding protein UgpC, found in Escherichia coli O6:H1 (strain CFT073 / ATCC 700928 / UPEC).